Consider the following 332-residue polypeptide: MPIHNLNHVNMFLQVIASGSISSAARILRKSHTAVSSAVSNLEIDLCVELVRRDGYKVEPTEQALRLIPYMRSLLNYQQLIGDIAFNLNKGPRNLRVLLDTAIPPSFCDTVSSVLLDDFNMVSLIRTSPADSLATIKQDNAEIDIAITIDEELKISRFNQCVLGYTKAFVVAHPQHPLCNASLHSIASLANYRQISLGSRSGQHSNLLRPVSDKVLFVENFDDMLRLVEAGVGWGIAPHYFVEERLRNGTLAVLSELYEPGGIDTKVYCYYNTALESERSFLRFLESARQRLRELGRQRFDDAPAWQPSIVETAQRRSGPKALAYRQRAAPE.

The 58-residue stretch at 4 to 61 (HNLNHVNMFLQVIASGSISSAARILRKSHTAVSSAVSNLEIDLCVELVRRDGYKVEPT) folds into the HTH lysR-type domain. A DNA-binding region (H-T-H motif) is located at residues 21–40 (ISSAARILRKSHTAVSSAVS).

Belongs to the LysR transcriptional regulatory family. In terms of assembly, forms homooligomers.

The protein resides in the cell inner membrane. It is found in the secreted. Both 3,4-dihydroxy-2-heptylquinoline (PQS) and its precursor 4-hydroxy-2-heptylquinoline (HHQ) function as ligands and promote MvfR DNA-binding activity leading to transcriptional activation. In terms of biological role, transcription regulator that plays a critical role in virulence by positively regulating the expression of multiple quorum sensing (QS)-regulated virulence factors, genes involved in protein secretion, translation, response to oxidative stress and the phnAB operon. At the stationary phase, negatively autoregulates its function through cleavage and translocation to the extracellular space. The protein is Multiple virulence factor regulator MvfR of Pseudomonas aeruginosa (strain ATCC 15692 / DSM 22644 / CIP 104116 / JCM 14847 / LMG 12228 / 1C / PRS 101 / PAO1).